A 287-amino-acid polypeptide reads, in one-letter code: ATP synthase gamma chain (287 aa).

It belongs to the ATPase gamma chain family. As to quaternary structure, F-type ATPases have 2 components, CF(1) - the catalytic core - and CF(0) - the membrane proton channel. CF(1) has five subunits: alpha(3), beta(3), gamma(1), delta(1), epsilon(1). CF(0) has three main subunits: a, b and c.

The protein localises to the cell inner membrane. Produces ATP from ADP in the presence of a proton gradient across the membrane. The gamma chain is believed to be important in regulating ATPase activity and the flow of protons through the CF(0) complex. In Hahella chejuensis (strain KCTC 2396), this protein is ATP synthase gamma chain.